The following is a 466-amino-acid chain: GTPase Der (466 aa).

EngA-type G domains are found at residues Pro-3–Pro-166 and Ile-177–Thr-350. GTP is bound by residues Gly-9–Ser-16, Asp-56–Ile-60, Asn-118–Asp-121, Gly-183–Ser-190, Asp-230–Val-234, and Asn-295–Asp-298. In terms of domain architecture, KH-like spans Asp-351–Asp-435. The segment at Lys-442–Arg-466 is disordered. The span at Arg-455–Arg-466 shows a compositional bias: basic and acidic residues.

Belongs to the TRAFAC class TrmE-Era-EngA-EngB-Septin-like GTPase superfamily. EngA (Der) GTPase family. As to quaternary structure, associates with the 50S ribosomal subunit.

In terms of biological role, GTPase that plays an essential role in the late steps of ribosome biogenesis. This Cellvibrio japonicus (strain Ueda107) (Pseudomonas fluorescens subsp. cellulosa) protein is GTPase Der.